We begin with the raw amino-acid sequence, 915 residues long: Protein translocase subunit SecA (915 aa).

Residues Gln87, 105 to 109 (GEGKT), and Asp512 each bind ATP. A disordered region spans residues 881–915 (LPGTAPVRPEPKIGRNEPCPCGSGKKYKHCHGQLN). Zn(2+)-binding residues include Cys899, Cys901, Cys910, and His911. Positions 905–915 (KKYKHCHGQLN) are enriched in basic residues.

It belongs to the SecA family. In terms of assembly, monomer and homodimer. Part of the essential Sec protein translocation apparatus which comprises SecA, SecYEG and auxiliary proteins SecDF-YajC and YidC. Requires Zn(2+) as cofactor.

The protein localises to the cell inner membrane. It localises to the cytoplasm. The enzyme catalyses ATP + H2O + cellular proteinSide 1 = ADP + phosphate + cellular proteinSide 2.. In terms of biological role, part of the Sec protein translocase complex. Interacts with the SecYEG preprotein conducting channel. Has a central role in coupling the hydrolysis of ATP to the transfer of proteins into and across the cell membrane, serving both as a receptor for the preprotein-SecB complex and as an ATP-driven molecular motor driving the stepwise translocation of polypeptide chains across the membrane. This chain is Protein translocase subunit SecA, found in Azotobacter vinelandii (strain DJ / ATCC BAA-1303).